The chain runs to 233 residues: Germin-like protein (233 aa).

A signal peptide spans 1–22 (MEAYKMFAFVVLLATTLYQAYA). A disulfide bridge connects residues C32 and C49. One can recognise a Cupin type-1 domain in the interval 63 to 215 (RGLNMPANTD…RPSISMRIWS (153 aa)). Residues H111, H113, E118, and H162 each coordinate Mn(2+).

The protein belongs to the germin family. As to quaternary structure, oligomer (believed to be a pentamer but probably hexamer). As to expression, expressed at high levels in unstressed roots.

The protein localises to the secreted. The protein resides in the extracellular space. It localises to the apoplast. Its function is as follows. May be involved in seed germination. This chain is Germin-like protein, found in Mesembryanthemum crystallinum (Common ice plant).